Consider the following 397-residue polypeptide: MGKEKFERTKPHVNIGTIGHIDHGKTTLTAAITKIASLKMGSKAVAYDEIDKAPEEKERGITIATAHVEYETTLRHYAHVDCPGHADYIKNMITGAAQMDGAIIVVAATDGPMPQTREHILLARQVGVPSIVVFLNKCDMVDDEELLELVELEVRELLSSYDFPGDDTPVIRGSALKALECDSADDDAAKPILELLDACDSYIPEPERDTDKPFLMPIEDVFSISGRGTVVTGRVERGIIKVGEQIEIVGIKDTMTTTCTGVEMFRKLLDQGQAGDNVGVLLRGVKRDDVERGQVLAAPKSITPHKKFKAEVYVLSKEEGGRHTPFFSGYRPQFYFRTTDITGIIGLEEGVEMVMPGDNATFIVELIHPVAMEQGLRFAIREGGRTVGAGVVSEILE.

The region spanning 10–207 (KPHVNIGTIG…ACDSYIPEPE (198 aa)) is the tr-type G domain. The G1 stretch occupies residues 19–26 (GHIDHGKT). Position 19 to 26 (19 to 26 (GHIDHGKT)) interacts with GTP. Position 26 (Thr-26) interacts with Mg(2+). The interval 60–64 (GITIA) is G2. Residues 81–84 (DCPG) are G3. GTP-binding positions include 81-85 (DCPGH) and 136-139 (NKCD). Positions 136 to 139 (NKCD) are G4. The tract at residues 174 to 176 (SAL) is G5.

The protein belongs to the TRAFAC class translation factor GTPase superfamily. Classic translation factor GTPase family. EF-Tu/EF-1A subfamily. Monomer.

It is found in the cytoplasm. It catalyses the reaction GTP + H2O = GDP + phosphate + H(+). Functionally, GTP hydrolase that promotes the GTP-dependent binding of aminoacyl-tRNA to the A-site of ribosomes during protein biosynthesis. This Oleidesulfovibrio alaskensis (strain ATCC BAA-1058 / DSM 17464 / G20) (Desulfovibrio alaskensis) protein is Elongation factor Tu.